We begin with the raw amino-acid sequence, 291 residues long: BTB/POZ domain-containing protein 19 (291 aa).

Positions 29–98 constitute a BTB domain; sequence SDVCFVVGQE…LYTNSVKLYR (70 aa). Residues 134 to 234 form the BACK domain; it reads CEALQVAVTF…LALLAPAELS (101 aa).

The sequence is that of BTB/POZ domain-containing protein 19 (BTBD19) from Homo sapiens (Human).